Reading from the N-terminus, the 299-residue chain is 4-diphosphocytidyl-2-C-methyl-D-erythritol kinase (299 aa).

The active site involves lysine 18. Residue 104–114 (PIASGIGGGSS) coordinates ATP. The active site involves aspartate 146.

Belongs to the GHMP kinase family. IspE subfamily.

The enzyme catalyses 4-CDP-2-C-methyl-D-erythritol + ATP = 4-CDP-2-C-methyl-D-erythritol 2-phosphate + ADP + H(+). Its pathway is isoprenoid biosynthesis; isopentenyl diphosphate biosynthesis via DXP pathway; isopentenyl diphosphate from 1-deoxy-D-xylulose 5-phosphate: step 3/6. In terms of biological role, catalyzes the phosphorylation of the position 2 hydroxy group of 4-diphosphocytidyl-2C-methyl-D-erythritol. The polypeptide is 4-diphosphocytidyl-2-C-methyl-D-erythritol kinase (Brucella melitensis biotype 1 (strain ATCC 23456 / CCUG 17765 / NCTC 10094 / 16M)).